Reading from the N-terminus, the 147-residue chain is Large ribosomal subunit protein uL16 (147 aa).

The segment at 1 to 20 (MLMPKKVKHRKVQRGRMKGK) is disordered.

This sequence belongs to the universal ribosomal protein uL16 family. Part of the 50S ribosomal subunit.

Functionally, binds 23S rRNA and is also seen to make contacts with the A and possibly P site tRNAs. In Clostridium kluyveri (strain ATCC 8527 / DSM 555 / NBRC 12016 / NCIMB 10680 / K1), this protein is Large ribosomal subunit protein uL16.